The following is a 310-amino-acid chain: Putative S-adenosyl-L-methionine-dependent methyltransferase ML2640 (310 aa).

Residues D132 and 161 to 162 (DL) contribute to the S-adenosyl-L-methionine site.

The protein belongs to the UPF0677 family.

Exhibits S-adenosyl-L-methionine-dependent methyltransferase activity. This chain is Putative S-adenosyl-L-methionine-dependent methyltransferase ML2640, found in Mycobacterium leprae (strain TN).